Here is a 359-residue protein sequence, read N- to C-terminus: Phospho-N-acetylmuramoyl-pentapeptide-transferase (359 aa).

Transmembrane regions (helical) follow at residues 3–23 (QILF…PVLI), 53–73 (GGVA…LIGI), 84–104 (GLLV…DDFI), 117–137 (TAKL…ALQF), 156–176 (IATV…LVSA), 187–207 (LDGL…IITF), 231–251 (LALI…WNAA), 255–275 (IFMG…LSIT), 283–303 (VVIG…VAVF), and 330–350 (VIIR…ALFY).

The protein belongs to the glycosyltransferase 4 family. MraY subfamily. Requires Mg(2+) as cofactor.

Its subcellular location is the cell membrane. The enzyme catalyses UDP-N-acetyl-alpha-D-muramoyl-L-alanyl-gamma-D-glutamyl-meso-2,6-diaminopimeloyl-D-alanyl-D-alanine + di-trans,octa-cis-undecaprenyl phosphate = di-trans,octa-cis-undecaprenyl diphospho-N-acetyl-alpha-D-muramoyl-L-alanyl-D-glutamyl-meso-2,6-diaminopimeloyl-D-alanyl-D-alanine + UMP. Its pathway is cell wall biogenesis; peptidoglycan biosynthesis. In terms of biological role, catalyzes the initial step of the lipid cycle reactions in the biosynthesis of the cell wall peptidoglycan: transfers peptidoglycan precursor phospho-MurNAc-pentapeptide from UDP-MurNAc-pentapeptide onto the lipid carrier undecaprenyl phosphate, yielding undecaprenyl-pyrophosphoryl-MurNAc-pentapeptide, known as lipid I. This is Phospho-N-acetylmuramoyl-pentapeptide-transferase from Rhodococcus opacus (strain B4).